Consider the following 409-residue polypeptide: Inactive serine protease 35 (409 aa).

The N-terminal stretch at 1–17 (MLLWLIFFTPGWTLIDG) is a signal peptide. N-linked (GlcNAc...) asparagine glycosylation is found at Asn-87 and Asn-107. The 285-residue stretch at 120–404 (VYGTDSRFSI…ICLWIHGNDA (285 aa)) folds into the Peptidase S1 domain. A disulfide bond links Cys-150 and Cys-166. The segment covering 188–203 (RNKSGGKKRRGSKRSR) has biased composition (basic residues). The interval 188 to 246 (RNKSGGKKRRGSKRSRRETSGGDQREGPREHLQDRVKAGRRRKQSGGGQRVSEGRPSFR) is disordered. Residues 204 to 224 (RETSGGDQREGPREHLQDRVK) show a composition bias toward basic and acidic residues.

This sequence belongs to the peptidase S1 family.

It is found in the secreted. This is Inactive serine protease 35 (PRSS35) from Macaca mulatta (Rhesus macaque).